The following is a 1043-amino-acid chain: MAAVTFASAITNAITSKPALTGMVQFGSFPPMPLRSTTVTTVATSVAQPKLYTVQFGSLDPVVVKSGAGSLAKATRQQPNVEIDVSLSEAAALEVAKPRSNAVLRMHEEANKERALFLDWEASLKRSSYGIAEDEKVVMTTHGVSKIVPRSSRAMKLKRARERRRAQQPIILKWEPKLSGISIGGGLSASVIEAEEVRTKWPLHKTPSMKKRTVHRICKMNDQGVDMLTRSLVKIFKTKSANIEYIGKKSIKVDFIRKERTKFARIQVAHLLGKRAQRDLLTGMEENHFIDILSKYSGNKTTINPGVVCAGWSGIVVGNGILTQKRSRSPSEAFVIRGEHEGKLYDARIKVTRTMSHKIVHFSAAGANFWKGFDRCFLAYRSDNREHTCYSGLDVTECGEVAALMCLAMFPCGKITCPDCVTDSELSQGQASGPSMKHRLTQLRDVIKSSYPRFKHAVQILDRYEQSLSSANENYQDFAEIQSISDGVEKAAFPHVNKLNAILIKGATVTGEEFSQATKHLLEIARYLKNRTENIEKGSLKSFRNKISQKAHINPTLMCDNQLDRNGNFIWGERGYHAKRFFSNYFEIIDPKKGYTQYETRAVPNGSRKLAIGKLIVPTNFEVLREQMKGEPVEPYPVTVECVSKLQGDFVHACCCVTTESGDPVLSEIKMPTKHHLVIGNSGDPKYIDLPEIEENKMYIAKEGYCYINIFLAMLVNVKESQAKEFTKVVRDKLVGELGKWPTLLDVATACYFLKVFYPDVANAELPRMLVDHKTKIIHVVDSYGSLSTGYHVLKTNTVEQLIKFTRCNLESSLKHYRVGGTEWEDTHGSSNIDNPQWCIKRLIKGVYKPKQLKEDMLANPFLPLYALLSPGVILAFYNSGSLEYLMNHYIRVDSNVAVLLVVLKSLAKKVSTSQSVLAQLQIIERSLPELIEAKANVNGPDDAATRACNRFMGMLLHMAEPNWELADGGYTILRDHSISILEKKLSTNLGRSMERVKLVGALCYKILLVKASNLYTERFANEKRSRFRRQIQRVSHVILRTE.

In terms of domain architecture, Peptidase S30 spans 219–362 (KMNDQGVDML…RTMSHKIVHF (144 aa)). Residues His-270, Asp-279, and Ser-313 each act as for P1 proteinase activity in the active site. Residues 414–417 (KITC) carry the Involved in interaction with stylet and aphid transmission motif. The Involved in virions binding and aphid transmission motif lies at 672–674 (PTK). In terms of domain architecture, Peptidase C6 spans 698 to 820 (MYIAKEGYCY…ESSLKHYRVG (123 aa)). Catalysis depends on for helper component proteinase activity residues Cys-706 and His-779.

Belongs to the potyviridae P3N-PIPO polyprotein family. Interacts (via PIPO domain) with host PCaP1 protein; this interaction may help to anchor the movement complex to the plasma membrane from which the complex could move to the plasmodesmata. Post-translationally, potyviral RNA is expressed as two polyproteins which undergo post-translational proteolytic processing. Genome polyprotein is processed by NIa-pro, P1 and HC-pro proteinases resulting in the production of at least ten individual proteins. P3N-PIPO is cleaved by P1 and HC-pro proteinases resulting in the production of three individual proteins. The P1 proteinase and the HC-pro cleave only their respective C-termini autocatalytically.

It is found in the host cell junction. It localises to the host plasmodesma. The enzyme catalyses Hydrolyzes a Gly-|-Gly bond at its own C-terminus, commonly in the sequence -Tyr-Xaa-Val-Gly-|-Gly, in the processing of the potyviral polyprotein.. Functionally, cysteine protease that cleaves a Gly-Gly dipeptide at its own C-terminus. Required for aphid transmission and also has proteolytic activity. Interacts with virions and aphid stylets. Acts as a suppressor of RNA-mediated gene silencing, also known as post-transcriptional gene silencing (PTGS), a mechanism of plant viral defense that limits the accumulation of viral RNAs. May have RNA-binding activity. Allows efficient cell to cell propagation, by bypassing the host cell wall barrier. Transports viral genome to neighboring plant cells directly through plasmosdesmata, without any budding. The protein is P3N-PIPO polyprotein of Alliaria petiolata (Garlic mustard).